Reading from the N-terminus, the 174-residue chain is Crossover junction endodeoxyribonuclease RuvC (174 aa).

Residues aspartate 8, glutamate 67, and aspartate 139 contribute to the active site. Mg(2+) is bound by residues aspartate 8, glutamate 67, and aspartate 139.

It belongs to the RuvC family. As to quaternary structure, homodimer which binds Holliday junction (HJ) DNA. The HJ becomes 2-fold symmetrical on binding to RuvC with unstacked arms; it has a different conformation from HJ DNA in complex with RuvA. In the full resolvosome a probable DNA-RuvA(4)-RuvB(12)-RuvC(2) complex forms which resolves the HJ. It depends on Mg(2+) as a cofactor.

It is found in the cytoplasm. It carries out the reaction Endonucleolytic cleavage at a junction such as a reciprocal single-stranded crossover between two homologous DNA duplexes (Holliday junction).. In terms of biological role, the RuvA-RuvB-RuvC complex processes Holliday junction (HJ) DNA during genetic recombination and DNA repair. Endonuclease that resolves HJ intermediates. Cleaves cruciform DNA by making single-stranded nicks across the HJ at symmetrical positions within the homologous arms, yielding a 5'-phosphate and a 3'-hydroxyl group; requires a central core of homology in the junction. The consensus cleavage sequence is 5'-(A/T)TT(C/G)-3'. Cleavage occurs on the 3'-side of the TT dinucleotide at the point of strand exchange. HJ branch migration catalyzed by RuvA-RuvB allows RuvC to scan DNA until it finds its consensus sequence, where it cleaves and resolves the cruciform DNA. In Pseudoalteromonas translucida (strain TAC 125), this protein is Crossover junction endodeoxyribonuclease RuvC.